Consider the following 2375-residue polypeptide: Talin-2 (2375 aa).

Residues 88–406 (RPQKIRMLDG…GYIDIILKKK (319 aa)) enclose the FERM domain. The interaction with PIP5K1C stretch occupies residues 312 to 406 (GVSFFLVKEK…GYIDIILKKK (95 aa)). 4 positions are modified to phosphoserine: S428, S450, S624, and S1024. Position 1666 is a phosphotyrosine (Y1666). The I/LWEQ domain occupies 2205–2375 (TEWVDPEDPT…KRLQAAGNAV (171 aa)).

As to quaternary structure, interacts directly with PIP5K1C.

It is found in the cytoplasm. The protein resides in the cell junction. It localises to the focal adhesion. Its subcellular location is the synapse. The protein localises to the cell membrane. It is found in the cytoskeleton. As a major component of focal adhesion plaques that links integrin to the actin cytoskeleton, may play an important role in cell adhesion. Recruits PIP5K1C to focal adhesion plaques and strongly activates its kinase activity. The protein is Talin-2 (Tln2) of Mus musculus (Mouse).